A 683-amino-acid polypeptide reads, in one-letter code: Methionine--tRNA ligase (683 aa).

A 'HIGH' region motif is present at residues 15 to 25; sequence PYANGPIHLGH. Zn(2+) contacts are provided by Cys146, Cys149, Cys159, and Cys162. The 'KMSKS' region signature appears at 332 to 336; the sequence is KMSKS. Lys335 lines the ATP pocket. A tRNA-binding domain is found at 581 to 683; that stretch reads DFCKVDLRVA…AGAKAGQRVK (103 aa).

It belongs to the class-I aminoacyl-tRNA synthetase family. MetG type 1 subfamily. Homodimer. The cofactor is Zn(2+).

The protein resides in the cytoplasm. It catalyses the reaction tRNA(Met) + L-methionine + ATP = L-methionyl-tRNA(Met) + AMP + diphosphate. In terms of biological role, is required not only for elongation of protein synthesis but also for the initiation of all mRNA translation through initiator tRNA(fMet) aminoacylation. The polypeptide is Methionine--tRNA ligase (Histophilus somni (strain 2336) (Haemophilus somnus)).